The primary structure comprises 325 residues: NADH-quinone oxidoreductase subunit H (325 aa).

Transmembrane regions (helical) follow at residues 11–31 (ILIS…CGAF), 81–101 (AIFT…FAIV), 114–134 (IGIL…LFAG), 154–174 (LSYE…AGSF), 186–206 (VWNV…GVAV), 237–257 (FFVG…TLFF), 265–285 (LPPF…FILI), and 304–324 (VCLP…LYNA).

This sequence belongs to the complex I subunit 1 family. In terms of assembly, NDH-1 is composed of 13 different subunits. Subunits NuoA, H, J, K, L, M, N constitute the membrane sector of the complex.

The protein resides in the cell inner membrane. It carries out the reaction a quinone + NADH + 5 H(+)(in) = a quinol + NAD(+) + 4 H(+)(out). NDH-1 shuttles electrons from NADH, via FMN and iron-sulfur (Fe-S) centers, to quinones in the respiratory chain. The immediate electron acceptor for the enzyme in this species is believed to be ubiquinone. Couples the redox reaction to proton translocation (for every two electrons transferred, four hydrogen ions are translocated across the cytoplasmic membrane), and thus conserves the redox energy in a proton gradient. This subunit may bind ubiquinone. This is NADH-quinone oxidoreductase subunit H from Yersinia pseudotuberculosis serotype O:1b (strain IP 31758).